The chain runs to 508 residues: Maturase K (508 aa).

The protein belongs to the intron maturase 2 family. MatK subfamily.

The protein resides in the plastid. It is found in the chloroplast. Its function is as follows. Usually encoded in the trnK tRNA gene intron. Probably assists in splicing its own and other chloroplast group II introns. This chain is Maturase K, found in Lupinus cosentinii (West Australian blue lupine).